We begin with the raw amino-acid sequence, 201 residues long: Ribosome maturation factor RimM (201 aa).

Residues 92–166 (DEDEFYHADL…RVVVEPPANF (75 aa)) form the PRC barrel domain. The disordered stretch occupies residues 169-201 (PAGPQPAEGEEMPDGALEALEGEEAGAGTAPQP).

It belongs to the RimM family. As to quaternary structure, binds ribosomal protein uS19.

The protein resides in the cytoplasm. In terms of biological role, an accessory protein needed during the final step in the assembly of 30S ribosomal subunit, possibly for assembly of the head region. Essential for efficient processing of 16S rRNA. May be needed both before and after RbfA during the maturation of 16S rRNA. It has affinity for free ribosomal 30S subunits but not for 70S ribosomes. The chain is Ribosome maturation factor RimM from Rhodospirillum centenum (strain ATCC 51521 / SW).